Reading from the N-terminus, the 907-residue chain is Protein translocase subunit SecA (907 aa).

Residues Gln-87, 105–109, and Asp-510 contribute to the ATP site; that span reads GEGKT. The Zn(2+) site is built by Cys-892, Cys-894, Cys-903, and His-904.

Belongs to the SecA family. As to quaternary structure, monomer and homodimer. Part of the essential Sec protein translocation apparatus which comprises SecA, SecYEG and auxiliary proteins SecDF-YajC and YidC. Requires Zn(2+) as cofactor.

The protein localises to the cell inner membrane. The protein resides in the cytoplasm. The catalysed reaction is ATP + H2O + cellular proteinSide 1 = ADP + phosphate + cellular proteinSide 2.. Functionally, part of the Sec protein translocase complex. Interacts with the SecYEG preprotein conducting channel. Has a central role in coupling the hydrolysis of ATP to the transfer of proteins into and across the cell membrane, serving both as a receptor for the preprotein-SecB complex and as an ATP-driven molecular motor driving the stepwise translocation of polypeptide chains across the membrane. The polypeptide is Protein translocase subunit SecA (Acinetobacter baumannii (strain ATCC 17978 / DSM 105126 / CIP 53.77 / LMG 1025 / NCDC KC755 / 5377)).